The primary structure comprises 327 residues: Zinc transport protein ZntB (327 aa).

Topologically, residues 1–271 are cytoplasmic; the sequence is METIYGSSLK…AMNRRTYTMS (271 aa). A helical membrane pass occupies residues 272-292; that stretch reads LLAMIFLPTTFLTGLFGVNLG. Over 293–300 the chain is Periplasmic; it reads GIPGNEYY. The chain crosses the membrane as a helical span at residues 301-321; the sequence is LGFAIFCLLLFGLVLFVAWWL. Residues 322 to 327 lie on the Cytoplasmic side of the membrane; sequence KKSKWL.

The protein belongs to the CorA metal ion transporter (MIT) (TC 1.A.35) family.

Its subcellular location is the cell inner membrane. It carries out the reaction Zn(2+)(out) + H(+)(out) = Zn(2+)(in) + H(+)(in). Its function is as follows. Zinc transporter. Acts as a Zn(2+):proton symporter, which likely mediates zinc ion uptake. In Photorhabdus laumondii subsp. laumondii (strain DSM 15139 / CIP 105565 / TT01) (Photorhabdus luminescens subsp. laumondii), this protein is Zinc transport protein ZntB.